The following is a 474-amino-acid chain: Glycogen synthase (474 aa).

An ADP-alpha-D-glucose-binding site is contributed by Lys-15.

This sequence belongs to the glycosyltransferase 1 family. Bacterial/plant glycogen synthase subfamily.

The catalysed reaction is [(1-&gt;4)-alpha-D-glucosyl](n) + ADP-alpha-D-glucose = [(1-&gt;4)-alpha-D-glucosyl](n+1) + ADP + H(+). It participates in glycan biosynthesis; glycogen biosynthesis. Synthesizes alpha-1,4-glucan chains using ADP-glucose. The polypeptide is Glycogen synthase (Chlamydia trachomatis serovar L2b (strain UCH-1/proctitis)).